The sequence spans 445 residues: Histone acetyltransferase of the MYST family 1 (445 aa).

In terms of domain architecture, Tudor-knot spans 60-118 (LEVGTRVMCQWRDGKYHPVKVIERRKNYNGGHNDYEYYVHYTEFNRRLDEWIKLEQLDL). Positions 169 to 440 (TKVKNIATIE…VDVSKMIWTP (272 aa)) constitute an MYST-type HAT domain. A C2HC MYST-type zinc finger spans residues 202–227 (LFFCEFCLSFMKRKEQLQRHMRKCDL). K269 is subject to N6-acetyllysine; by autocatalysis. Acetyl-CoA-binding positions include 312–314 (ILT) and 319–325 (QRKGYGK). Catalysis depends on E345, which acts as the Proton donor/acceptor. Residue S349 participates in acetyl-CoA binding.

The protein belongs to the MYST (SAS/MOZ) family. In terms of assembly, interacts with MRG1 and MRG2. Component of the NuA4 histone acetyltransferase complex. Autoacetylation at Lys-269 is required for proper function. In terms of tissue distribution, expressed in cotyledons, leaves, stems, roots and, at higher levels in developing flowers, particularly in the anthers and gynoecia. Constitutively expressed in all tissues, predominantly in shoot apical meristem.

It is found in the nucleus. It carries out the reaction L-lysyl-[protein] + acetyl-CoA = N(6)-acetyl-L-lysyl-[protein] + CoA + H(+). Functionally, histone acetyltransferase which may be involved in transcriptional activation. Acetylates 'Lys-5' of histone H4 (H4K5ac). Essential for gametophyte development. Involved in DNA repair after UV-B exposure. Negative regulator of flowering controlling the H4K5ac levels in the FLC chromatin. The sequence is that of Histone acetyltransferase of the MYST family 1 from Arabidopsis thaliana (Mouse-ear cress).